A 403-amino-acid chain; its full sequence is Fasciclin-like arabinogalactan protein 2 (403 aa).

Residues 1–26 (MAYLRRAATALVLIFQLHLFLSLSNA) form the signal peptide. 2 FAS1 domains span residues 27-174 (HNIT…SQVL) and 187-326 (SDLI…DKVL). N-linked (GlcNAc...) asparagine glycosylation is found at N28, N130, N164, and N248. The interval 338–371 (SAPAPKSSKKKPKNAEADADGPSADAPSDDDVEV) is disordered. A378 carries GPI-anchor amidated alanine lipidation. Positions 379-403 (VSAMITRTSNVVTAIVGLCFGVWLM) are cleaved as a propeptide — removed in mature form.

This sequence belongs to the fasciclin-like AGP family. As to expression, expressed mainly in flowers and to a lesser extent in leaves and roots.

It localises to the cell membrane. May be a cell surface adhesion protein. The protein is Fasciclin-like arabinogalactan protein 2 (FLA2) of Arabidopsis thaliana (Mouse-ear cress).